We begin with the raw amino-acid sequence, 283 residues long: uncharacterized protein (283 aa).

The signal sequence occupies residues 1-23 (MFAFASFAISAIFFLCSFSYVSS).

It is found in the secreted. This is an uncharacterized protein from Schizosaccharomyces pombe (strain 972 / ATCC 24843) (Fission yeast).